The following is a 130-amino-acid chain: Small ribosomal subunit protein uS11 (130 aa).

Residues 111–130 (IRDVTPVPHNGSRPPKRRRA) are disordered.

This sequence belongs to the universal ribosomal protein uS11 family. As to quaternary structure, part of the 30S ribosomal subunit. Interacts with proteins S7 and S18. Binds to IF-3.

Located on the platform of the 30S subunit, it bridges several disparate RNA helices of the 16S rRNA. Forms part of the Shine-Dalgarno cleft in the 70S ribosome. In Lactobacillus acidophilus (strain ATCC 700396 / NCK56 / N2 / NCFM), this protein is Small ribosomal subunit protein uS11.